The sequence spans 174 residues: NADH-ubiquinone oxidoreductase chain 6 (174 aa).

Helical transmembrane passes span Met1–Ser21, Ser24–Leu44, Gly47–Phe67, Phe86–Val106, and Trp151–Thr171.

It belongs to the complex I subunit 6 family. As to quaternary structure, core subunit of respiratory chain NADH dehydrogenase (Complex I) which is composed of 45 different subunits.

It is found in the mitochondrion inner membrane. The catalysed reaction is a ubiquinone + NADH + 5 H(+)(in) = a ubiquinol + NAD(+) + 4 H(+)(out). In terms of biological role, core subunit of the mitochondrial membrane respiratory chain NADH dehydrogenase (Complex I) which catalyzes electron transfer from NADH through the respiratory chain, using ubiquinone as an electron acceptor. Essential for the catalytic activity and assembly of complex I. The sequence is that of NADH-ubiquinone oxidoreductase chain 6 (MT-ND6) from Papio hamadryas (Hamadryas baboon).